The primary structure comprises 156 residues: MILKADFLKLSANNLISWARQGSFWPLTFGLACCALEMMHATVSRYDFDRFGVIFRATPRQADLIIVAGTVTNKMAPALRRLYDQTADPKWVLSMGSCANGGGYYHYSYAVVKGCDKIIPVDMLCPRCPPTAEALFFGVLQLQKTLMKTINEKKVF.

Cysteine 33, cysteine 34, cysteine 98, and cysteine 128 together coordinate [4Fe-4S] cluster.

The protein belongs to the complex I 20 kDa subunit family. The cofactor is [4Fe-4S] cluster.

The protein resides in the mitochondrion. The enzyme catalyses a ubiquinone + NADH + 5 H(+)(in) = a ubiquinol + NAD(+) + 4 H(+)(out). The chain is NADH-ubiquinone oxidoreductase 20 kDa subunit (NAD10) from Paramecium tetraurelia.